A 261-amino-acid chain; its full sequence is Tryptophan synthase alpha chain (261 aa).

Catalysis depends on proton acceptor residues Glu-47 and Asp-58.

The protein belongs to the TrpA family. Tetramer of two alpha and two beta chains.

It catalyses the reaction (1S,2R)-1-C-(indol-3-yl)glycerol 3-phosphate + L-serine = D-glyceraldehyde 3-phosphate + L-tryptophan + H2O. It functions in the pathway amino-acid biosynthesis; L-tryptophan biosynthesis; L-tryptophan from chorismate: step 5/5. In terms of biological role, the alpha subunit is responsible for the aldol cleavage of indoleglycerol phosphate to indole and glyceraldehyde 3-phosphate. The protein is Tryptophan synthase alpha chain of Neisseria meningitidis serogroup B (strain ATCC BAA-335 / MC58).